Consider the following 433-residue polypeptide: Homogentisate 1,2-dioxygenase (433 aa).

His-288 serves as the catalytic Proton acceptor. Residues His-331 and Glu-337 each contribute to the Fe cation site. The homogentisate site is built by Tyr-346 and His-367. His-367 contributes to the Fe cation binding site.

Belongs to the homogentisate dioxygenase family. As to quaternary structure, hexamer; dimer of trimers. The cofactor is Fe cation.

It carries out the reaction homogentisate + O2 = 4-maleylacetoacetate + H(+). It functions in the pathway amino-acid degradation; L-phenylalanine degradation; acetoacetate and fumarate from L-phenylalanine: step 4/6. In terms of biological role, involved in the catabolism of homogentisate (2,5-dihydroxyphenylacetate or 2,5-OH-PhAc), a central intermediate in the degradation of phenylalanine and tyrosine. Catalyzes the oxidative ring cleavage of the aromatic ring of homogentisate to yield maleylacetoacetate. The chain is Homogentisate 1,2-dioxygenase from Pseudomonas putida (strain W619).